Here is a 570-residue protein sequence, read N- to C-terminus: Sulfite reductase [NADPH] hemoprotein beta-component (570 aa).

C434, C440, C479, and C483 together coordinate [4Fe-4S] cluster. C483 contacts siroheme.

Belongs to the nitrite and sulfite reductase 4Fe-4S domain family. Alpha(8)-beta(8). The alpha component is a flavoprotein, the beta component is a hemoprotein. Siroheme is required as a cofactor. Requires [4Fe-4S] cluster as cofactor.

It carries out the reaction hydrogen sulfide + 3 NADP(+) + 3 H2O = sulfite + 3 NADPH + 4 H(+). The protein operates within sulfur metabolism; hydrogen sulfide biosynthesis; hydrogen sulfide from sulfite (NADPH route): step 1/1. Component of the sulfite reductase complex that catalyzes the 6-electron reduction of sulfite to sulfide. This is one of several activities required for the biosynthesis of L-cysteine from sulfate. In Escherichia coli (strain B / BL21-DE3), this protein is Sulfite reductase [NADPH] hemoprotein beta-component.